The following is a 223-amino-acid chain: Ribose-5-phosphate isomerase A (223 aa).

Substrate-binding positions include 29–32 (TGST), 82–85 (DGAD), and 95–98 (KGGG). Glu-104 acts as the Proton acceptor in catalysis. Lys-122 contacts substrate.

Belongs to the ribose 5-phosphate isomerase family. Homodimer.

It catalyses the reaction aldehydo-D-ribose 5-phosphate = D-ribulose 5-phosphate. Its pathway is carbohydrate degradation; pentose phosphate pathway; D-ribose 5-phosphate from D-ribulose 5-phosphate (non-oxidative stage): step 1/1. Functionally, catalyzes the reversible conversion of ribose-5-phosphate to ribulose 5-phosphate. This chain is Ribose-5-phosphate isomerase A, found in Neisseria meningitidis serogroup C (strain 053442).